Consider the following 965-residue polypeptide: Calsyntenin-2 (965 aa).

The signal sequence occupies residues 1–20; sequence MLPGRLCLVPLLLALGVGSG. Topologically, residues 21–835 are extracellular; it reads GGSGDGGDSR…SIQRSSVVPS (815 aa). 2 Cadherin domains span residues 46–162 and 163–282; these read IETS…APTF and KEPA…MPLF. N-linked (GlcNAc...) asparagine glycans are attached at residues Asn-58 and Asn-100. N-linked (GlcNAc...) asparagine glycans are attached at residues Asn-344, Asn-376, Asn-720, and Asn-733. The chain crosses the membrane as a helical span at residues 836-856; it reads IATVVIIISVCMLVFVVAMGV. At 857-965 the chain is on the cytoplasmic side; the sequence is YRVRIAHQHF…NTAGVINIWK (109 aa). The interval 891 to 965 is disordered; that stretch reads PMEKHEGPGH…NTAGVINIWK (75 aa). Basic and acidic residues predominate over residues 892–902; it reads MEKHEGPGHGE. Acidic residues predominate over residues 903–915; it reads DETEGEEEEEAEE. Over residues 942-959 the composition is skewed to polar residues; that stretch reads QSGTSSQRPERSTWNTAG.

It belongs to the calsyntenin family. Proteolytically processed under normal cellular conditions. A primary zeta-cleavage generates a large extracellular (soluble) N-terminal domain (sAlc) and a short C-terminal transmembrane fragment (CTF1). A secondary cleavage catalyzed by gamma-secretase within the transmembrane domain releases the beta-Alc-gamma chain in the extracellular milieu and produces an intracellular fragment (AlcICD). This processing is strongly suppressed in the tripartite complex formed with APBA2 and APP, which seems to prevent the association with PSEN1.

The protein resides in the postsynaptic cell membrane. The protein localises to the endoplasmic reticulum membrane. It localises to the golgi apparatus membrane. Its subcellular location is the cell projection. It is found in the dendrite. Its function is as follows. Postsynaptic adhesion molecule that binds to presynaptic neurexins to mediate synapse formation, and which is involved in learning and memory. Promotes synapse development by acting as a cell adhesion molecule at the postsynaptic membrane, which associates with neurexin-alpha at the presynaptic membrane. This Rattus norvegicus (Rat) protein is Calsyntenin-2.